A 506-amino-acid polypeptide reads, in one-letter code: AMP phosphorylase (506 aa).

Residues Gly-167, 193 to 198, and Thr-202 contribute to the AMP site; that span reads SRAITG. Asp-255 (proton donor) is an active-site residue. AMP-binding residues include Ser-263 and Lys-287.

Belongs to the thymidine/pyrimidine-nucleoside phosphorylase family. Type 2 subfamily.

It catalyses the reaction AMP + phosphate = alpha-D-ribose 1,5-bisphosphate + adenine. The catalysed reaction is CMP + phosphate = cytosine + alpha-D-ribose 1,5-bisphosphate. It carries out the reaction UMP + phosphate = alpha-D-ribose 1,5-bisphosphate + uracil. Functionally, catalyzes the conversion of AMP and phosphate to adenine and ribose 1,5-bisphosphate (R15P). Exhibits phosphorylase activity toward CMP and UMP in addition to AMP. Functions in an archaeal AMP degradation pathway, together with R15P isomerase and RubisCO. This chain is AMP phosphorylase, found in Methanosarcina acetivorans (strain ATCC 35395 / DSM 2834 / JCM 12185 / C2A).